The primary structure comprises 352 residues: N-terminal EF-hand calcium-binding protein 1 (352 aa).

Ser4 carries the phosphoserine modification. 2 consecutive EF-hand domains span residues 26–61 (KGMS…GVLS) and 60–95 (LSGE…HLGE). Positions 39, 41, 43, 45, and 50 each coordinate Ca(2+). A coiled-coil region spans residues 135 to 163 (LLKETLNQLQSLQNSLECAMETTEEQTRQ). The interval 155–202 (ETTEEQTRQERQGPSKPEVLSIQWPGKRSSRRVQRHNSFSPNSPQFNV) is disordered. The span at 190-202 (HNSFSPNSPQFNV) shows a compositional bias: polar residues. Ser192 and Ser197 each carry phosphoserine. A coiled-coil region spans residues 209–275 (EEDNQWMTQI…EEFQLALKHY (67 aa)). The region spanning 252 to 340 (MLVQRQMSVT…LETPELTSTM (89 aa)) is the ABM domain.

As to quaternary structure, interacts with STX1. May interact with CPNE6. In terms of tissue distribution, expressed in brain (at protein level). Expressed in the cerebral cortex only in layer 4, thalamic nuclei (the mediodorsal nucleus), hippocampus (a small band of pyramidal neurons at the boundary between CA1 and CA3), interneurons interspersed throughout the hippocampus proper, interneurons in the hilus, bodies of the neurons but also their dendritic projections (at protein level).

The protein resides in the cytoplasm. The chain is N-terminal EF-hand calcium-binding protein 1 (Necab1) from Mus musculus (Mouse).